A 238-amino-acid chain; its full sequence is Protein G1-like8 (238 aa).

Disordered regions lie at residues 1-33 (MEGG…RYES) and 147-238 (KARG…ATRV). The span at 10-27 (GQAQPVAQAPPAMQPMQQ) shows a compositional bias: low complexity. In terms of domain architecture, ALOG spans 30–157 (RYESQKRRDW…ARGIPYEKKK (128 aa)). A Nuclear localization signal motif is present at residues 155-159 (KKKRK). Positions 165 to 176 (QPPPPPPPPPQH) are enriched in pro residues. Low complexity-rich tracts occupy residues 177–213 (QPGA…ATSQ) and 222–238 (TTTT…ATRV).

Belongs to the plant homeotic and developmental regulators ALOG protein family.

Its subcellular location is the nucleus. Functionally, probable transcription regulator that acts as a developmental regulator by promoting cell growth in response to light. The chain is Protein G1-like8 (G1L8) from Oryza sativa subsp. japonica (Rice).